We begin with the raw amino-acid sequence, 429 residues long: Adenylosuccinate synthetase (429 aa).

GTP is bound by residues 12–18 (GDEGKGK) and 40–42 (GHT). The Proton acceptor role is filled by Asp13. The Mg(2+) site is built by Asp13 and Gly40. Residues 13-16 (DEGK), 38-41 (NAGH), Thr129, Arg143, Gln223, Thr238, and Arg302 each bind IMP. Residue His41 is the Proton donor of the active site. Substrate is bound at residue 298 to 304 (TVTGRKR). Residues Arg304, 330 to 332 (KLD), and 412 to 414 (STS) each bind GTP.

The protein belongs to the adenylosuccinate synthetase family. As to quaternary structure, homodimer. The cofactor is Mg(2+).

The protein localises to the cytoplasm. It carries out the reaction IMP + L-aspartate + GTP = N(6)-(1,2-dicarboxyethyl)-AMP + GDP + phosphate + 2 H(+). The protein operates within purine metabolism; AMP biosynthesis via de novo pathway; AMP from IMP: step 1/2. Its function is as follows. Plays an important role in the de novo pathway of purine nucleotide biosynthesis. Catalyzes the first committed step in the biosynthesis of AMP from IMP. This chain is Adenylosuccinate synthetase, found in Rhizorhabdus wittichii (strain DSM 6014 / CCUG 31198 / JCM 15750 / NBRC 105917 / EY 4224 / RW1) (Sphingomonas wittichii).